Reading from the N-terminus, the 214-residue chain is Phosphatidylserine decarboxylase proenzyme (214 aa).

Residue serine 182 is the Schiff-base intermediate with substrate; via pyruvic acid of the active site. Pyruvic acid (Ser); by autocatalysis is present on serine 182.

This sequence belongs to the phosphatidylserine decarboxylase family. PSD-A subfamily. As to quaternary structure, heterodimer of a large membrane-associated beta subunit and a small pyruvoyl-containing alpha subunit. Pyruvate serves as cofactor. In terms of processing, is synthesized initially as an inactive proenzyme. Formation of the active enzyme involves a self-maturation process in which the active site pyruvoyl group is generated from an internal serine residue via an autocatalytic post-translational modification. Two non-identical subunits are generated from the proenzyme in this reaction, and the pyruvate is formed at the N-terminus of the alpha chain, which is derived from the carboxyl end of the proenzyme. The post-translation cleavage follows an unusual pathway, termed non-hydrolytic serinolysis, in which the side chain hydroxyl group of the serine supplies its oxygen atom to form the C-terminus of the beta chain, while the remainder of the serine residue undergoes an oxidative deamination to produce ammonia and the pyruvoyl prosthetic group on the alpha chain.

Its subcellular location is the cell membrane. It carries out the reaction a 1,2-diacyl-sn-glycero-3-phospho-L-serine + H(+) = a 1,2-diacyl-sn-glycero-3-phosphoethanolamine + CO2. The protein operates within phospholipid metabolism; phosphatidylethanolamine biosynthesis; phosphatidylethanolamine from CDP-diacylglycerol: step 2/2. Catalyzes the formation of phosphatidylethanolamine (PtdEtn) from phosphatidylserine (PtdSer). This chain is Phosphatidylserine decarboxylase proenzyme, found in Burkholderia lata (strain ATCC 17760 / DSM 23089 / LMG 22485 / NCIMB 9086 / R18194 / 383).